The following is a 99-amino-acid chain: Ubiquitin-related modifier 1 (99 aa).

Gly-99 is subject to 1-thioglycine. Gly-99 participates in a covalent cross-link: Glycyl lysine isopeptide (Gly-Lys) (interchain with K-? in acceptor proteins).

This sequence belongs to the URM1 family. C-terminal thiocarboxylation occurs in 2 steps, it is first acyl-adenylated (-COAMP) via the hesA/moeB/thiF part of UBA4, then thiocarboxylated (-COSH) via the rhodanese domain of UBA4.

The protein localises to the cytoplasm. It functions in the pathway tRNA modification; 5-methoxycarbonylmethyl-2-thiouridine-tRNA biosynthesis. Acts as a sulfur carrier required for 2-thiolation of mcm(5)S(2)U at tRNA wobble positions of cytosolic tRNA(Lys), tRNA(Glu) and tRNA(Gln). Serves as sulfur donor in tRNA 2-thiolation reaction by being thiocarboxylated (-COSH) at its C-terminus by the MOCS3 homolog UBA4. The sulfur is then transferred to tRNA to form 2-thiolation of mcm(5)S(2)U. Prior mcm(5) tRNA modification by the elongator complex is required for 2-thiolation. Also acts as a ubiquitin-like protein (UBL) that is covalently conjugated via an isopeptide bond to lysine residues of target proteins such as AHP1. The thiocarboxylated form serves as substrate for conjugation and oxidative stress specifically induces the formation of UBL-protein conjugates. The chain is Ubiquitin-related modifier 1 from Yarrowia lipolytica (strain CLIB 122 / E 150) (Yeast).